We begin with the raw amino-acid sequence, 347 residues long: GMP reductase (347 aa).

108–131 (ADFEKTKQILDLNPALNFVCIDVA) is a binding site for NADP(+). K(+)-binding residues include G181 and G183. C186 functions as the Thioimidate intermediate in the catalytic mechanism. 216 to 239 (IVSDGGCTTPGDVAKAFGGGADFV) contributes to the NADP(+) binding site.

It belongs to the IMPDH/GMPR family. GuaC type 1 subfamily. Homotetramer.

It carries out the reaction IMP + NH4(+) + NADP(+) = GMP + NADPH + 2 H(+). Catalyzes the irreversible NADPH-dependent deamination of GMP to IMP. It functions in the conversion of nucleobase, nucleoside and nucleotide derivatives of G to A nucleotides, and in maintaining the intracellular balance of A and G nucleotides. The sequence is that of GMP reductase from Escherichia coli O7:K1 (strain IAI39 / ExPEC).